A 319-amino-acid chain; its full sequence is MSKKTKQELENNKLSKRLRHAVGDAINDFNMIEPDDKIMVCLSGGKDSYALLDILRQLQASAPIDFELVAVNLDQKQPGFPEEVLPTYLESIGVPYKIVEEDTYSTVKRVLDEGKTTCSLCSRLRRGILYRTAKELGCTKIALGHHRDDILATMFLNMFYGGKLKAMPPKLVSDNGEHIVIRPLAYVKEKDLIKYAELKQFPIIPCNLCGSQPNLQRQVIGDMLRDWDKRFPGRIESMFSALQNVVPSHLADTELFDFAGLERGQTLKHGGDLAFDSEKMPERFSDGSEEDESEIKIAPQKAERKVINILANKPKTCGA.

Residues 43–48 (SGGKDS) carry the PP-loop motif motif. Residues C118, C121, and C209 each contribute to the [4Fe-4S] cluster site.

The protein belongs to the TtcA family. Homodimer. Mg(2+) is required as a cofactor. The cofactor is [4Fe-4S] cluster.

It localises to the cytoplasm. It carries out the reaction cytidine(32) in tRNA + S-sulfanyl-L-cysteinyl-[cysteine desulfurase] + AH2 + ATP = 2-thiocytidine(32) in tRNA + L-cysteinyl-[cysteine desulfurase] + A + AMP + diphosphate + H(+). Its pathway is tRNA modification. Functionally, catalyzes the ATP-dependent 2-thiolation of cytidine in position 32 of tRNA, to form 2-thiocytidine (s(2)C32). The sulfur atoms are provided by the cysteine/cysteine desulfurase (IscS) system. The polypeptide is tRNA-cytidine(32) 2-sulfurtransferase (Neisseria meningitidis serogroup C / serotype 2a (strain ATCC 700532 / DSM 15464 / FAM18)).